The primary structure comprises 377 residues: UDP-N-acetylglucosamine 2-epimerase (377 aa).

H212 is a catalytic residue.

Belongs to the UDP-N-acetylglucosamine 2-epimerase family. In terms of assembly, homodimer.

It catalyses the reaction UDP-N-acetyl-alpha-D-glucosamine + H2O = aldehydo-N-acetyl-D-mannosamine + UDP + H(+). Its function is as follows. Catalyzes the conversion of UDP-N-acetylglucosamine (UDP-GlcNAc) to UDP and N-acetyl-D-mannosamine (ManNAc). In Neisseria meningitidis serogroup B (strain ATCC BAA-335 / MC58), this protein is UDP-N-acetylglucosamine 2-epimerase (siaA).